Consider the following 449-residue polypeptide: Hyaluronidase-1 (449 aa).

The first 23 residues, 1–23 (MYHLWIKCLAAWIFLKRCNGVHA), serve as a signal peptide directing secretion. 2 disulfide bridges follow: C47-C340 and C211-C227. Residues N67, N103, and N111 are each glycosylated (N-linked (GlcNAc...) asparagine). E135 (proton donor) is an active-site residue. N-linked (GlcNAc...) asparagine glycosylation occurs at N153. N-linked (GlcNAc...) asparagine glycosylation is present at N357. Disulfide bonds link C365-C376, C370-C427, and C429-C438. The N-linked (GlcNAc...) asparagine glycan is linked to N401. One can recognise an EGF-like domain in the interval 427–438 (CQCYQGWKGLYC).

This sequence belongs to the glycosyl hydrolase 56 family. Monomer. In terms of tissue distribution, expressed by the venom gland.

The protein resides in the secreted. It carries out the reaction Random hydrolysis of (1-&gt;4)-linkages between N-acetyl-beta-D-glucosamine and D-glucuronate residues in hyaluronate.. Functionally, snake venom endo-hyaluronidase that degrades hyaluronan to smaller oligosaccharide fragments. In venom, it is not toxic by itself, but increases the diffusion of other venom proteins by degrading the extracellular matrix. In addition, it displays antiedematogenic activity. This is Hyaluronidase-1 from Bitis arietans (African puff adder).